We begin with the raw amino-acid sequence, 491 residues long: ATP-dependent protease ATPase subunit HslU (491 aa).

Residues Ile34, Gly76–Glu81, Asp296, Glu364, and Arg436 each bind ATP.

The protein belongs to the ClpX chaperone family. HslU subfamily. As to quaternary structure, a double ring-shaped homohexamer of HslV is capped on each side by a ring-shaped HslU homohexamer. The assembly of the HslU/HslV complex is dependent on binding of ATP.

It is found in the cytoplasm. ATPase subunit of a proteasome-like degradation complex; this subunit has chaperone activity. The binding of ATP and its subsequent hydrolysis by HslU are essential for unfolding of protein substrates subsequently hydrolyzed by HslV. HslU recognizes the N-terminal part of its protein substrates and unfolds these before they are guided to HslV for hydrolysis. The sequence is that of ATP-dependent protease ATPase subunit HslU from Chlorobaculum tepidum (strain ATCC 49652 / DSM 12025 / NBRC 103806 / TLS) (Chlorobium tepidum).